Here is a 541-residue protein sequence, read N- to C-terminus: MVGASSSYASPLCTWFVAACMSVSHGGGDSRQAVALQSGGRSRRRRQLSKCSVASGSASIQALVTSCLDFGPCTHYNNNNALSSLFGSNSVSLNRNQRRLNRAASSGGAMAVMEMEKEAAVNKKPPTEQRRVVVTGMGVETSLGHDPHTFYENLLQGNSGISQIENFDCSEFPTRIAGEIKSFSTEGWVAPKLSKRMDKFMLYLLTAGKKALADGGVTDEVMAEFDKTKCGVLIGSAMGGMKVFYDAIEALRISYKKMNPFCVPFATTNMGSAMLAMDLGWMGPNYSISTACATSNFCILNSANHIIKGEADVMLCGGSDAVIIPIGLGGFVACRALSQRNNDPTKASRPWDTNRDGFVMGEGAGVLLLEELEHAKKRGATIYAEFLGGSFTCDAYHMTEPHPDGAGVILCIERALASAGISKEQINYINAHATSTHAGDIKEYQALAHCFGQNPELKVNSTKSMIGHLLGAAGAVEAVATVQAIRTGWVHPNINLENPDSGVDTKLLVGPKKERLDIKAALSNSFGFGGHNSSIIFAPYK.

Residues 1-103 constitute a chloroplast transit peptide; the sequence is MVGASSSYAS…NRNQRRLNRA (103 aa). The 411-residue stretch at 129-539 folds into the Ketosynthase family 3 (KS3) domain; it reads QRRVVVTGMG…GHNSSIIFAP (411 aa). Catalysis depends on for beta-ketoacyl synthase activity residues cysteine 292, histidine 432, and histidine 468.

This sequence belongs to the thiolase-like superfamily. Beta-ketoacyl-ACP synthases family. In terms of assembly, homodimer. Mostly expressed in siliques, and, to a lower extent, in leaves, stems, flower buds, and flowers.

It localises to the plastid. The protein localises to the chloroplast stroma. The enzyme catalyses a fatty acyl-[ACP] + malonyl-[ACP] + H(+) = a 3-oxoacyl-[ACP] + holo-[ACP] + CO2. Functionally, essential protein that catalyzes the condensation reaction of fatty acid synthesis by the addition to an acyl acceptor of two carbons from malonyl-ACP. Specific for elongation from C-16 and C-16 to unsaturated C-18 fatty acids. Confers resistance to low temperatures by maintaining chloroplast membranes integrity. Involved in the regulation of fatty acids ratios during seed metabolism. Required for embryo development, especially at the transition from the globular to the heart stage. The polypeptide is 3-oxoacyl-[acyl-carrier-protein] synthase II, chloroplastic (KAS2) (Arabidopsis thaliana (Mouse-ear cress)).